The sequence spans 510 residues: Inositol-3-phosphate synthase (510 aa).

Residues Gly-70, Gly-71, Asn-72, Asn-73, Asp-143, Ile-180, Gln-190, Arg-193, Thr-230, Ala-231, Asn-232, Thr-233, Gly-281, Ser-282, Asp-306, Ser-309, Asn-340, Asn-341, Asp-342, Lys-355, Gly-393, Asp-394, Asp-422, and Ser-423 each coordinate NAD(+).

This sequence belongs to the myo-inositol 1-phosphate synthase family. Requires NAD(+) as cofactor.

Its subcellular location is the cytoplasm. It is found in the cytosol. The protein resides in the nucleus. The catalysed reaction is D-glucose 6-phosphate = 1D-myo-inositol 3-phosphate. It functions in the pathway polyol metabolism; myo-inositol biosynthesis; myo-inositol from D-glucose 6-phosphate: step 1/2. Functionally, key enzyme in myo-inositol biosynthesis pathway that catalyzes the conversion of glucose 6-phosphate to 1-myo-inositol 1-phosphate in a NAD-dependent manner. In Spirodela polyrhiza (Giant duckweed), this protein is Inositol-3-phosphate synthase (TUR1).